Consider the following 433-residue polypeptide: Ribosomal protein uS12 methylthiotransferase RimO (433 aa).

The 116-residue stretch at N9–R124 folds into the MTTase N-terminal domain. [4Fe-4S] cluster-binding residues include C18, C53, C87, C148, C152, and C155. A Radical SAM core domain is found at T134–D364. A TRAM domain is found at Q367 to A433.

It belongs to the methylthiotransferase family. RimO subfamily. It depends on [4Fe-4S] cluster as a cofactor.

The protein resides in the cytoplasm. The catalysed reaction is L-aspartate(89)-[ribosomal protein uS12]-hydrogen + (sulfur carrier)-SH + AH2 + 2 S-adenosyl-L-methionine = 3-methylsulfanyl-L-aspartate(89)-[ribosomal protein uS12]-hydrogen + (sulfur carrier)-H + 5'-deoxyadenosine + L-methionine + A + S-adenosyl-L-homocysteine + 2 H(+). Its function is as follows. Catalyzes the methylthiolation of an aspartic acid residue of ribosomal protein uS12. This is Ribosomal protein uS12 methylthiotransferase RimO from Flavobacterium psychrophilum (strain ATCC 49511 / DSM 21280 / CIP 103535 / JIP02/86).